Here is a 398-residue protein sequence, read N- to C-terminus: Maltoporin (398 aa).

The signal sequence occupies residues 1–30 (MTDKNNKRLFKVAPLATAIAASLFTVNASA).

Belongs to the porin LamB (TC 1.B.3) family. In terms of assembly, homotrimer formed of three 18-stranded antiparallel beta-barrels, containing three independent channels.

It localises to the cell outer membrane. The catalysed reaction is beta-maltose(in) = beta-maltose(out). Functionally, involved in the transport of maltose and maltodextrins. This is Maltoporin from Hahella chejuensis (strain KCTC 2396).